The chain runs to 752 residues: Photosystem I P700 chlorophyll a apoprotein A1 (752 aa).

Transmembrane regions (helical) follow at residues 73 to 96 (IFSA…FHGA), 159 to 182 (LYVT…FHYH), 198 to 222 (LNHH…HVSA), 294 to 312 (IAHH…GHQY), 349 to 372 (WHAQ…HHMY), 388 to 414 (LCIF…IFMV), 436 to 458 (AIIS…LYIH), and 533 to 551 (FLIH…LILL). Cys575 and Cys584 together coordinate [4Fe-4S] cluster. Helical transmembrane passes span 591 to 612 (HVFL…HFSW) and 666 to 688 (LSAY…MFLF). Residue His677 participates in chlorophyll a' binding. Residues Met685 and Tyr693 each contribute to the chlorophyll a site. Residue Trp694 participates in phylloquinone binding. The chain crosses the membrane as a helical span at residues 726–746 (AVGVAHYLLGGIATTWAFFHA).

The protein belongs to the PsaA/PsaB family. The PsaA/B heterodimer binds the P700 chlorophyll special pair and subsequent electron acceptors. PSI consists of a core antenna complex that captures photons, and an electron transfer chain that converts photonic excitation into a charge separation. The cyanobacterial PSI reaction center is composed of one copy each of PsaA,B,C,D,E,F,I,J,K,L,M and X, and forms trimeric complexes. PSI electron transfer chain: 5 chlorophyll a, 1 chlorophyll a', 2 phylloquinones and 3 4Fe-4S clusters. PSI core antenna: 90 chlorophyll a, 22 carotenoids, 3 phospholipids and 1 galactolipid. P700 is a chlorophyll a/chlorophyll a' dimer, A0 is one or more chlorophyll a, A1 is one or both phylloquinones and FX is a shared 4Fe-4S iron-sulfur center. serves as cofactor.

The protein resides in the cellular thylakoid membrane. The catalysed reaction is reduced [plastocyanin] + hnu + oxidized [2Fe-2S]-[ferredoxin] = oxidized [plastocyanin] + reduced [2Fe-2S]-[ferredoxin]. Its function is as follows. PsaA and PsaB bind P700, the primary electron donor of photosystem I (PSI), as well as the electron acceptors A0, A1 and FX. PSI is a plastocyanin/cytochrome c6-ferredoxin oxidoreductase, converting photonic excitation into a charge separation, which transfers an electron from the donor P700 chlorophyll pair to the spectroscopically characterized acceptors A0, A1, FX, FA and FB in turn. Oxidized P700 is reduced on the lumenal side of the thylakoid membrane by plastocyanin or cytochrome c6. This is Photosystem I P700 chlorophyll a apoprotein A1 from Nostoc punctiforme (strain ATCC 29133 / PCC 73102).